The following is a 769-amino-acid chain: Protein lethal(2)denticleless (769 aa).

WD repeat units lie at residues 99–129, 143–174, 194–249, 264–303, 320–349, and 362–393; these read CHFN…RLWE, GHTR…LIWD, GHTG…KVWD, RHKL…YCYN, NSTF…YIWN, and GHTV…KIWR. The disordered stretch occupies residues 196 to 221; sequence TGGPGTPVSQRKQRTRTPKMAGGTTS. A Phosphothreonine modification is found at T201. A Phosphoserine modification is found at S204. Disordered stretches follow at residues 448 to 467, 476 to 562, and 655 to 769; these read RLMD…TTKR, AGQE…HVYT, and SPRL…VGSD. A Phosphothreonine modification is found at T456. S459 is modified (phosphoserine). The span at 503–518 shows a compositional bias: polar residues; it reads PSSQETACRHIQLQSI. Phosphoserine is present on S524. Basic and acidic residues predominate over residues 524–533; that stretch reads SPSKRQKENS. Residues 546-562 are compositionally biased toward polar residues; it reads STPSHSPLSENVNHVYT. Position 655 is a phosphoserine (S655). Over residues 657-666 the composition is skewed to polar residues; that stretch reads RLQSLRQSEC. 3 positions are modified to phosphoserine: S679, S691, and S711. Residues 689–704 show a composition bias toward low complexity; it reads AGSSSHSHSQSQPKTP. A compositionally biased stretch (polar residues) spans 705–714; it reads TSSRRNSETT. Positions 728–743 are enriched in low complexity; sequence PAEETTTTNAAPSSSD. Positions 758-769 are enriched in polar residues; the sequence is SMRTPTTAVGSD.

It belongs to the WD repeat cdt2 family. Component of the DCX(DTL) E3 ubiquitin ligase complex, at least composed of Cul-4, pic/DDB1, l(2)dtl/CDT2 and Roc1a. Ubiquitously expressed during embryogenesis with no sign of tissue specificity in expression up to stage 17.

Its subcellular location is the cytoplasm. The protein operates within protein modification; protein ubiquitination. Functionally, substrate-specific adapter of a DCX (DDB1-CUL4-X-box) E3 ubiquitin-protein ligase complex required for cell cycle control. The DCX(DTL) complex, also named CRL4(CDT2) complex, mediates the polyubiquitination and subsequent degradation of E2f during S phase. E2f degradation is necessary to ensure proper development. Substrates require their interaction with PCNA for their polyubiquitination: substrates interact with PCNA via their PIP-box, leading to recruit the DCX(DTL) complex. This is Protein lethal(2)denticleless (l(2)dtl) from Drosophila melanogaster (Fruit fly).